The chain runs to 126 residues: UPF0538 protein C2orf76 homolog (126 aa).

Belongs to the UPF0538 family.

This Danio rerio (Zebrafish) protein is UPF0538 protein C2orf76 homolog.